We begin with the raw amino-acid sequence, 515 residues long: Ribose import ATP-binding protein RbsA 1 (515 aa).

2 ABC transporter domains span residues 8–244 (FQME…IGRE) and 256–503 (VPAT…LNIH). 40 to 47 (GENGAGKS) is an ATP binding site.

Belongs to the ABC transporter superfamily. Ribose importer (TC 3.A.1.2.1) family. In terms of assembly, the complex is composed of an ATP-binding protein (RbsA), two transmembrane proteins (RbsC) and a solute-binding protein (RbsB).

It is found in the cell inner membrane. The catalysed reaction is D-ribose(out) + ATP + H2O = D-ribose(in) + ADP + phosphate + H(+). Its function is as follows. Part of the ABC transporter complex RbsABC involved in ribose import. Responsible for energy coupling to the transport system. The protein is Ribose import ATP-binding protein RbsA 1 of Mesorhizobium japonicum (strain LMG 29417 / CECT 9101 / MAFF 303099) (Mesorhizobium loti (strain MAFF 303099)).